A 305-amino-acid polypeptide reads, in one-letter code: Acyl transferase (305 aa).

Residues serine 114, aspartate 211, and histidine 241 each act as charge relay system in the active site.

The protein belongs to the LuxD family.

It functions in the pathway lipid metabolism; fatty acid reduction for biolumincescence. Its function is as follows. Acyl transferase is part of the fatty acid reductase system required for aldehyde biosynthesis; it produces fatty acids for the luminescent reaction. The polypeptide is Acyl transferase (luxD) (Vibrio harveyi (Beneckea harveyi)).